Consider the following 24-residue polypeptide: Cryptonin (24 aa).

Antimicrobial peptide, active against the Gram-negative bacterium E.coli K12-594 (MIC=3.12 ug/ml), the Gram-positive bacteria B.subtilis KCTC 3086 (MIC=3.12 ug/ml), S.aureus KCTC 1928 (MIC=25 ug/ml) and M.luteus KCTC 3063 (MIC=1.56 ug/ml), the antibiotic resistant bacteria methicillin-resistant S.aureus (MRSA) (MIC=25 ug/ml) and vancomycin-resistant Enterococci (VRE) (MIC=25 ug/ml), and the fungi C.albicans KCTC 7965 (MIC=50 ug/ml) and C.tropicalis KCTC 1925 (MIC=3.12 ug/ml). Has very low hemolytic activity on rat erythrocytes. The polypeptide is Cryptonin (Cryptotympana dubia (Korean horse cicada)).